The primary structure comprises 318 residues: Transcription factor zip-4 (318 aa).

The segment covering 1-13 (MYNYNYSRGNKSM) has biased composition (polar residues). Disordered stretches follow at residues 1 to 20 (MYNY…PRFH), 147 to 205 (EKKP…TAAA), 238 to 257 (NNDA…LQKD), and 273 to 318 (ELQS…KSNY). Positions 173–190 (DYQEEGETSLSDNDESVD) are enriched in acidic residues. In terms of domain architecture, bZIP spans 228–291 (EPIYKLKRAR…ERDQQLIKQL (64 aa)). Residues 232–266 (KLKRARNNDAVRKSRNKAKELQLQKDEEYDEMKKR) are basic motif. Residues 242–280 (VRKSRNKAKELQLQKDEEYDEMKKRITQLEAELQSEREG) adopt a coiled-coil conformation. The interval 267–274 (ITQLEAEL) is leucine-zipper. Residues 275 to 298 (QSEREGRERDQQLIKQLIREKEST) show a composition bias toward basic and acidic residues. Over residues 307-318 (RNALESFNKSNY) the composition is skewed to polar residues.

Belongs to the bZIP family. C/EBP subfamily.

The protein resides in the nucleus. Transcription factor that binds to the promoter and the enhancer regions of target genes. Involved in responding to mitochondrial damage. Has a protective role in response to infection by the Gram-negative bacterium P.aeruginosa. In Caenorhabditis elegans, this protein is Transcription factor zip-4.